Consider the following 375-residue polypeptide: Probable pectin lyase D (375 aa).

The signal sequence occupies residues 1-19 (MKYAAVLTTVAALASRALG). 2 disulfide bridges follow: cysteine 82–cysteine 101 and cysteine 91–cysteine 225. A glycan (N-linked (GlcNAc...) asparagine) is linked at asparagine 128. Arginine 255 is a catalytic residue. A disulfide bridge links cysteine 321 with cysteine 329.

Belongs to the polysaccharide lyase 1 family.

Its subcellular location is the secreted. The enzyme catalyses Eliminative cleavage of (1-&gt;4)-alpha-D-galacturonan methyl ester to give oligosaccharides with 4-deoxy-6-O-methyl-alpha-D-galact-4-enuronosyl groups at their non-reducing ends.. Pectinolytic enzymes consist of four classes of enzymes: pectin lyase, polygalacturonase, pectin methylesterase and rhamnogalacturonase. Among pectinolytic enzymes, pectin lyase is the most important in depolymerization of pectin, since it cleaves internal glycosidic bonds of highly methylated pectins. This is Probable pectin lyase D (pelD) from Aspergillus flavus (strain ATCC 200026 / FGSC A1120 / IAM 13836 / NRRL 3357 / JCM 12722 / SRRC 167).